We begin with the raw amino-acid sequence, 369 residues long: Putative F-box protein At1g70960 (369 aa).

The region spanning 3 to 54 (NTSFETLPRHMQMEILSRVPLKFLMKFMCVSKKWASIIRGEEFREDYLFQSM) is the F-box domain.

This Arabidopsis thaliana (Mouse-ear cress) protein is Putative F-box protein At1g70960.